The sequence spans 512 residues: MAGGIIQLVAYGIQDLYLTGDPQITFFKVVYRRHTNFSVESIIQNFTSVPDFGSTVSCTLSKSGDMINKIYVYIELPSVNVFYDESGNLDKFKKFAWVRNIGYALIKDVSIEIGGKLIDKQYGEWMYIWSQVTNKSDEGLDKMIGNIPLLYDFSNGKPKYSLYVPLEFWFCRNSGLSLPLVALSSSEVKITISFRSAEECYRIGPTHSIEIMEDIVPFEFGDYIEQKIGQKTIHGLYMGYDYMTKKLYYIKIHSPTAIKKSFESQQLRNSTSQRENYRIYNSLTGSYCTPKPDHSEMSEPTELSQKLHFINAYLYVDYVYLDNDERMMLIKNPQEYLIEQIQYNQEINVKNSNVKQKLTLNHPCKAHYWVVQSDSLVGPGTINDVFNFTTSHIRNHDGRTIGENPVTKSKLMLNSRERFKQRDGKYFNIVQPYQHHYRGPDTGINMYSVSINSQCHQPSSTINMSRIDDISMEMQLKNVNPNNTHKIRSYTTSYNILRVCFNIGGLAFESMD.

The protein belongs to the NCLDV major capsid protein family.

The protein localises to the virion. This Acanthamoeba polyphaga mimivirus (APMV) protein is Probable capsid protein 4.